The primary structure comprises 547 residues: Solute carrier family 22 member 25 (547 aa).

At 1–9 (MAFQDLLDQ) the chain is on the cytoplasmic side. A helical membrane pass occupies residues 10–30 (VGGLGRFQILQMVFLIMFNVI). The Extracellular portion of the chain corresponds to 31–145 (VYHQTQLENF…DLVCESQPLN (115 aa)). 2 N-linked (GlcNAc...) asparagine glycosylation sites follow: Asn56 and Asn102. The helical transmembrane segment at 146–166 (SVAKFLFMAGMMVGGNLYGHL) threads the bilayer. Residues 167–177 (SDRFGRKFVLR) lie on the Cytoplasmic side of the membrane. The helical transmembrane segment at 178 to 198 (WSYLQLAIVGTCAAFAPTILV) threads the bilayer. Residues 199 to 204 (YCSLRF) lie on the Extracellular side of the membrane. Residues 205 to 225 (LAGAATFSIIVNTVLLIVEWI) form a helical membrane-spanning segment. Residues 226-234 (THQFCAMAL) lie on the Cytoplasmic side of the membrane. The chain crosses the membrane as a helical span at residues 235–255 (TLTLCAASIGHITLGSLAFVI). At 256–259 (RDQC) the chain is on the extracellular side. Residues 260 to 280 (ILQLVMSAPCFVFFLFSRWLA) form a helical membrane-spanning segment. Residues 281-349 (ESARWLIINN…LLRIPNICKR (69 aa)) are Cytoplasmic-facing. The chain crosses the membrane as a helical span at residues 350–370 (ICFLSFVRFASTIPFWGLTLH). The Extracellular segment spans residues 371 to 377 (LQHLGNN). A helical transmembrane segment spans residues 378–398 (VFLLQTLFGAVTLLANCVAPW). The Cytoplasmic portion of the chain corresponds to 399–406 (ALNHMSRR). A helical transmembrane segment spans residues 407-427 (LSQMLLMFLLATCLLAIIFVP). Residues 428 to 434 (QEMQTLR) are Extracellular-facing. The helical transmembrane segment at 435-455 (VVLATLGVGAASLGITCSTAQ) threads the bilayer. Over 456–470 (ENELIPSIIRGRATG) the chain is Cytoplasmic. The helical transmembrane segment at 471–491 (ITGNFANIGGALASLMMILSI) threads the bilayer. Residues 492-494 (YSR) are Extracellular-facing. Residues 495–515 (PLPWIIYGVFAILSGLVVLLL) form a helical membrane-spanning segment. Topologically, residues 516–547 (PETRNQPLLDSIQDVENEGVNSLAAPQRSSVL) are cytoplasmic.

It belongs to the major facilitator (TC 2.A.1) superfamily. Organic cation transporter (TC 2.A.1.19) family. As to expression, expressed exclusively in liver in both embryo and adult.

The protein resides in the membrane. This chain is Solute carrier family 22 member 25, found in Homo sapiens (Human).